Consider the following 778-residue polypeptide: NAD-dependent deacetylase sir2B (778 aa).

ANK repeat units follow at residues 83 to 112 (LNWTPLHVAVSNKSIEVVTLLLERNIEISI), 114 to 142 (RYTAFHIAACNGDLNIIEKMITMNRVPNG), 148 to 178 (DMETSLFLSITNNHFEISEKIMDYYQSSMNS), 191 to 221 (HGVSPLIMSVLRKNLKMIKKLIEEGDADINS), 225 to 255 (DNSTSLHCAAIIDFTEAIEYLLDIGGIELMN), 260 to 289 (YGNSPIHEAAIKGNFKSIQTFINQLKKIII), 317 to 354 (DGSTPLHLCCNCVNSDNIENNLKSCKVLIEEGGVQVNG), 358 to 390 (GNATALHILACVGEDKSLPLVKYFLSIGSDPTI), and 394 to 423 (YGWTPIHQAYNNKNIQIYQLLLDHLKLTNS). The disordered stretch occupies residues 438–458 (SSTSTSSSSSSSSSSSSSSSS). Residues 465 to 778 (KEELKLKGIE…DYFNTLFNSF (314 aa)) form the Deacetylase sirtuin-type domain. The active-site Proton acceptor is His-608. 4 residues coordinate Zn(2+): Cys-616, Cys-619, Cys-642, and Cys-647. The segment at 727–746 (KLKQQQENESGESSNDNDNN) is disordered. A compositionally biased stretch (low complexity) spans 733 to 746 (ENESGESSNDNDNN).

This sequence belongs to the sirtuin family. Requires Zn(2+) as cofactor.

It carries out the reaction N(6)-acetyl-L-lysyl-[protein] + NAD(+) + H2O = 2''-O-acetyl-ADP-D-ribose + nicotinamide + L-lysyl-[protein]. In terms of biological role, NAD-dependent deacetylase, which plays an important role in the regulation of transcriptional repression. The protein is NAD-dependent deacetylase sir2B (sir2B) of Dictyostelium discoideum (Social amoeba).